Reading from the N-terminus, the 824-residue chain is MDRKYDFKSIEAKWQAYWENKQLFKVEEDPEKPKYYNLEMFPYPSGHLHMGHVRNYAIGDVVARFKSMNGFNVLHPMGWDAFGLPAENAAIKNAIHPATWTYSNIENMKRQLKTMGISYDWDRELATCKPDYYKFTQWMFLKLYENKLAYKKKSAVNWCPSCQTVLANEQVVDGACERCEAVIEKKQLEQWFFKITDYAQRLLDDLALLPGWPEKVKTMQKNWIGRSEGCEFSLHIEDSDEVLTVFTTRPDTVFGVTYMVLAPEHPLVEKICHPEQEKEVKAFVNKMKYLNEMARTSTEAEKEGVFTGAYAINPMDGSRIPIWIANYVLMDYGTGAIMAVPAHDQRDFEFARKYDIPVKVVIKGEDTPLDGNLLQESYPGDGHMVNSGNFDGLTVEEGQKAVIKFMEEKGIGQGTVNYRLRDWLISRQRYWGAPIPIVYCPECGPVAVPEEELPLYLPEDIDFKPYAESPLKHLERFYKTTCPSCGKEALRETDTMDTFVCSSWYFDRFCSPHESKQPFSREAVDYWMPVDQYIGGVEHAILHLMYARFFTKFLFDINVLSCQEPFTRLLTQGMVLKDNAKMSKSKGNVVSPEEIIDTYGADTARLFILFASPPERDLEWSEQGVEGAFRFLNRVWRLVSELAEGIKDLPAAEHFPELDSEAKNLRFKTHATIKKVTEDIGERFNFNTAISAIMELSNTLGAYKGIKKPNWPVVKEAVDNLLILLSPFSPHICEELWQLTGHAESIYLQKWPKYDPEALLQEEIEIVLQISGKVRDRIMVPVDAGREELEKIALDNPKIRELTRGKEIVKLIVVPGKLVNVVAK.

The short motif at 42–52 (PYPSGHLHMGH) is the 'HIGH' region element. Positions 581-585 (KMSKS) match the 'KMSKS' region motif. K584 is a binding site for ATP.

The protein belongs to the class-I aminoacyl-tRNA synthetase family.

It is found in the cytoplasm. It carries out the reaction tRNA(Leu) + L-leucine + ATP = L-leucyl-tRNA(Leu) + AMP + diphosphate. This is Leucine--tRNA ligase from Syntrophomonas wolfei subsp. wolfei (strain DSM 2245B / Goettingen).